We begin with the raw amino-acid sequence, 211 residues long: Transcription antitermination protein NusB (211 aa).

It belongs to the NusB family.

Its function is as follows. Involved in transcription antitermination. Required for transcription of ribosomal RNA (rRNA) genes. Binds specifically to the boxA antiterminator sequence of the ribosomal RNA (rrn) operons. The polypeptide is Transcription antitermination protein NusB (Trichormus variabilis (strain ATCC 29413 / PCC 7937) (Anabaena variabilis)).